A 301-amino-acid chain; its full sequence is ATP synthase gamma chain (301 aa).

This sequence belongs to the ATPase gamma chain family. F-type ATPases have 2 components, CF(1) - the catalytic core - and CF(0) - the membrane proton channel. CF(1) has five subunits: alpha(3), beta(3), gamma(1), delta(1), epsilon(1). CF(0) has three main subunits: a, b and c.

It localises to the cell inner membrane. Functionally, produces ATP from ADP in the presence of a proton gradient across the membrane. The gamma chain is believed to be important in regulating ATPase activity and the flow of protons through the CF(0) complex. The sequence is that of ATP synthase gamma chain from Helicobacter pylori (strain HPAG1).